Consider the following 826-residue polypeptide: Sister chromatid cohesion protein PDS5 homolog D (826 aa).

5 HEAT repeats span residues 18 to 54, 55 to 94, 151 to 188, 189 to 226, and 230 to 267; these read GTNLLSPPSSTDDLLTLLDETESLLKNVEQDQPLSMQ, SALIPSRNALVSVDLLSHPDSDVRVSVVSCLTEIVRITAP, DLILQMFRNFFKFIRSDHPQLVFSSMELIMIAIIDETE, QVSTDLLDSLLATVKKENQNVSPMSWSLAEKVLSRCAR, and PYIIEALKSRGTSLDMYSPVVSSICQSVFNTPKVHSPV. Disordered stretches follow at residues 261–551 and 640–826; these read PKVH…EVES and KKSK…KRKS. 2 stretches are compositionally biased toward basic and acidic residues: residues 269–286 and 296–309; these read TKEHEEKLDLGHSRKENL and RHETRGINEKEKVR. Positions 281–288 match the Nuclear localization signal 1 motif; it reads SRKENLSK. Polar residues predominate over residues 311 to 323; the sequence is GNKSSLLKQSLKQ. Positions 357–364 match the Nuclear localization signal 2 motif; it reads GKRDPLKT. The segment covering 396–408 has biased composition (polar residues); sequence SPATSSRSLTGSL. An HEAT 6 repeat occupies 424-461; it reads SLSSPRLKKLASCFRDEEPNQEDDRKIGNSSKQTRSKN. Positions 437 to 450 are enriched in basic and acidic residues; that stretch reads FRDEEPNQEDDRKI. A compositionally biased stretch (polar residues) spans 451 to 460; sequence GNSSKQTRSK. Positions 644-663 are enriched in low complexity; it reads NVAVSVEPTSSSGVRSSSRT. Over residues 665–701 the composition is skewed to basic and acidic residues; it reads MKKDCGKRLNKQVEKTREGKNLRSLKELNAETDRTAE. The segment covering 702–724 has biased composition (acidic residues); it reads EQEVSLEAESDDRSEEQEYEDDC. Positions 725–746 are enriched in basic and acidic residues; sequence SDKKEQSQDKGVEAETKEEEKQ. Composition is skewed to acidic residues over residues 752-763, 771-800, and 811-826; these read GESEGEDSESEE, DDMEDDEEEEEEEIDHMEDEAEEEKEEVDD, and EKEEEEEEEDEEKRKS. Residues 770 to 825 are a coiled coil; that stretch reads TDDMEDDEEEEEEEIDHMEDEAEEEKEEVDDKEASANMSEIEKEEEEEEEDEEKRK.

The protein belongs to the PDS5 family. Interacts with the cohesin complex.

The protein resides in the nucleus. Its function is as follows. Cohesin cofactor dispensable during the meiotic division but playing an important role in DNA repair by homologous recombination (HR) probably by helping SMC5/SMC6 complex. Regulator of sister chromatid cohesion in mitosis which may stabilize cohesin complex association with chromatin. May couple sister chromatid cohesion during mitosis to DNA replication. Cohesion ensures that chromosome partitioning is accurate in both meiotic and mitotic cells and plays an important role in DNA repair. The chain is Sister chromatid cohesion protein PDS5 homolog D from Arabidopsis thaliana (Mouse-ear cress).